A 680-amino-acid chain; its full sequence is Probable oxidoreductase YoaE (680 aa).

The 58-residue stretch at 9 to 66 (NGIFKSVCSLDCPDQCGLLIHKKDGKIVKVQGDPDHPVTAGNICNKVRNMTERIYDEK) folds into the 4Fe-4S Mo/W bis-MGD-type domain. Positions 16, 20, 24, and 52 each coordinate [4Fe-4S] cluster.

The protein belongs to the prokaryotic molybdopterin-containing oxidoreductase family. Mo-bis(molybdopterin guanine dinucleotide) is required as a cofactor.

The protein is Probable oxidoreductase YoaE (yoaE) of Bacillus subtilis (strain 168).